Reading from the N-terminus, the 206-residue chain is 2-phospho-L-lactate guanylyltransferase (206 aa).

Belongs to the CofC family. As to quaternary structure, homodimer.

It carries out the reaction (2S)-2-phospholactate + GTP + H(+) = (2S)-lactyl-2-diphospho-5'-guanosine + diphosphate. Its pathway is cofactor biosynthesis; coenzyme F420 biosynthesis. In terms of biological role, guanylyltransferase that catalyzes the activation of (2S)-2-phospholactate (2-PL) as (2S)-lactyl-2-diphospho-5'-guanosine, via the condensation of 2-PL with GTP. It is involved in the biosynthesis of coenzyme F420, a hydride carrier cofactor. This is 2-phospho-L-lactate guanylyltransferase from Archaeoglobus profundus (strain DSM 5631 / JCM 9629 / NBRC 100127 / Av18).